The sequence spans 188 residues: Threonylcarbamoyl-AMP synthase (188 aa).

The region spanning 3-188 is the YrdC-like domain; the sequence is QLHPSDIKDI…RSGKILRNGQ (186 aa).

This sequence belongs to the SUA5 family. TsaC subfamily.

It is found in the cytoplasm. It catalyses the reaction L-threonine + hydrogencarbonate + ATP = L-threonylcarbamoyladenylate + diphosphate + H2O. Required for the formation of a threonylcarbamoyl group on adenosine at position 37 (t(6)A37) in tRNAs that read codons beginning with adenine. Catalyzes the conversion of L-threonine, HCO(3)(-)/CO(2) and ATP to give threonylcarbamoyl-AMP (TC-AMP) as the acyladenylate intermediate, with the release of diphosphate. The chain is Threonylcarbamoyl-AMP synthase from Shewanella putrefaciens (strain CN-32 / ATCC BAA-453).